A 2193-amino-acid polypeptide reads, in one-letter code: Genome polyprotein (2193 aa).

The N-myristoyl glycine; by host moiety is linked to residue G2. Over 2 to 1503 (GAQVSTQKTG…HVSRAFICLQ (1502 aa)) the chain is Cytoplasmic. The interval 567–583 (ELQSDVREAVEGAIGRV) is amphipathic alpha-helix. Catalysis depends on for protease 2A activity residues H880 and D898. Positions 915 and 917 each coordinate Zn(2+). Catalysis depends on C969, which acts as the For protease 2A activity. Residues C975 and H977 each coordinate Zn(2+). The tract at residues 1109 to 1181 (NNRWLKKFTE…EQSAPSQGDQ (73 aa)) is membrane-binding. Residues 1109–1247 (NNRWLKKFTE…SPGAGKSVAT (139 aa)) are oligomerization. The RNA-binding stretch occupies residues 1130-1134 (AIKIQ). An SF3 helicase domain is found at 1213 to 1369 (EKKMSNYIQF…SMYSQNGKIN (157 aa)). Residues C1377, C1389, and C1394 each coordinate Zn(2+). Residues 1377–1394 (CDEECCPVNFKKCCPLVC) form a C4-type; degenerate zinc finger. Positions 1421 to 1428 (EYNHRHSV) are RNA-binding. The tract at residues 1432 to 1437 (LEALFQ) is oligomerization. Residues 1504–1519 (ALTTFVSVAGIIYIIY) lie within the membrane without spanning it. Topologically, residues 1520–2193 (KLFAGFQGAY…TLRRKWLDSF (674 aa)) are cytoplasmic. Y1529 carries the post-translational modification O-(5'-phospho-RNA)-tyrosine. Residues 1549–1727 (GPAFEFAVAM…FSAALLKHYF (179 aa)) enclose the Peptidase C3 domain. Active-site for protease 3C activity residues include H1588, E1619, and C1695. The RdRp catalytic domain occupies 1958–2074 (GHLIAFDYSG…SYPWPIDASL (117 aa)). Positions 1964 and 2060 each coordinate Mg(2+).

This sequence belongs to the picornaviruses polyprotein family. In terms of assembly, interacts with capsid protein VP1 and capsid protein VP3 to form heterotrimeric protomers. Interacts with capsid protein VP0, and capsid protein VP3 to form heterotrimeric protomers. Five protomers subsequently associate to form pentamers which serve as building blocks for the capsid. Interacts with capsid protein VP2, capsid protein VP3 and capsid protein VP4 following cleavage of capsid protein VP0. As to quaternary structure, interacts with capsid protein VP1 and capsid protein VP3 in the mature capsid. In terms of assembly, interacts with capsid protein VP0 and capsid protein VP1 to form heterotrimeric protomers. Five protomers subsequently associate to form pentamers which serve as building blocks for the capsid. Interacts with capsid protein VP4 in the mature capsid. Interacts with protein 2C; this interaction may be important for virion morphogenesis. Interacts with capsid protein VP1 and capsid protein VP3. As to quaternary structure, homodimer. In terms of assembly, homohexamer; forms a hexameric ring structure with 6-fold symmetry characteristic of AAA+ ATPases. Interacts (via N-terminus) with host RTN3 (via reticulon domain); this interaction is important for viral replication. Interacts with capsid protein VP3; this interaction may be important for virion morphogenesis. Interacts with protein 3CD. As to quaternary structure, homodimer. Interacts with host GBF1. Interacts (via GOLD domain) with host ACBD3 (via GOLD domain); this interaction allows the formation of a viral protein 3A/ACBD3 heterotetramer with a 2:2 stoichiometry, which will stimulate the recruitment of host PI4KB in order to synthesize PI4P at the viral RNA replication sites. In terms of assembly, interacts with RNA-directed RNA polymerase. Interacts with protein 3AB and with RNA-directed RNA polymerase. As to quaternary structure, interacts with Viral protein genome-linked and with protein 3CD. It depends on Mg(2+) as a cofactor. In terms of processing, specific enzymatic cleavages in vivo by the viral proteases yield processing intermediates and the mature proteins. Myristoylation is required for the formation of pentamers during virus assembly. Further assembly of 12 pentamers and a molecule of genomic RNA generates the provirion. Post-translationally, during virion maturation, immature virions are rendered infectious following cleavage of VP0 into VP4 and VP2. This maturation seems to be an autocatalytic event triggered by the presence of RNA in the capsid and it is followed by a conformational change infectious virion. In terms of processing, myristoylation is required during RNA encapsidation and formation of the mature virus particle. VPg is uridylylated by the polymerase into VPg-pUpU. This acts as a nucleotide-peptide primer for the genomic RNA replication.

Its subcellular location is the virion. The protein resides in the host cytoplasm. It is found in the host cytoplasmic vesicle membrane. It localises to the host nucleus. The catalysed reaction is a ribonucleoside 5'-triphosphate + H2O = a ribonucleoside 5'-diphosphate + phosphate + H(+). It carries out the reaction Selective cleavage of Tyr-|-Gly bond in the picornavirus polyprotein.. The enzyme catalyses RNA(n) + a ribonucleoside 5'-triphosphate = RNA(n+1) + diphosphate. It catalyses the reaction Selective cleavage of Gln-|-Gly bond in the poliovirus polyprotein. In other picornavirus reactions Glu may be substituted for Gln, and Ser or Thr for Gly.. Replication or transcription is subject to high level of random mutations by the nucleotide analog ribavirin. Its function is as follows. Forms an icosahedral capsid of pseudo T=3 symmetry with capsid proteins VP2 and VP3. The capsid is 300 Angstroms in diameter, composed of 60 copies of each capsid protein and enclosing the viral positive strand RNA genome. Capsid protein VP1 mainly forms the vertices of the capsid. Capsid protein VP1 interacts with host cell receptor to provide virion attachment to target host cells. This attachment induces virion internalization. Tyrosine kinases are probably involved in the entry process. After binding to its receptor, the capsid undergoes conformational changes. Capsid protein VP1 N-terminus (that contains an amphipathic alpha-helix) and capsid protein VP4 are externalized. Together, they shape a pore in the host membrane through which viral genome is translocated to host cell cytoplasm. Functionally, forms an icosahedral capsid of pseudo T=3 symmetry with capsid proteins VP2 and VP3. The capsid is 300 Angstroms in diameter, composed of 60 copies of each capsid protein and enclosing the viral positive strand RNA genome. In terms of biological role, lies on the inner surface of the capsid shell. After binding to the host receptor, the capsid undergoes conformational changes. Capsid protein VP4 is released, Capsid protein VP1 N-terminus is externalized, and together, they shape a pore in the host membrane through which the viral genome is translocated into the host cell cytoplasm. Component of immature procapsids, which is cleaved into capsid proteins VP4 and VP2 after maturation. Allows the capsid to remain inactive before the maturation step. Its function is as follows. Cysteine protease that cleaves viral polyprotein and specific host proteins. It is responsible for the autocatalytic cleavage between the P1 and P2 regions, which is the first cleavage occurring in the polyprotein. Also cleaves the host translation initiation factor EIF4G1, in order to shut down the capped cellular mRNA translation. Inhibits the host nucleus-cytoplasm protein and RNA trafficking by cleaving host members of the nuclear pores. Counteracts stress granule formation probably by antagonizing its assembly or promoting its dissassembly. Functionally, plays an essential role in the virus replication cycle by acting as a viroporin. Creates a pore in the host endoplasmic reticulum and as a consequence releases Ca2+ in the cytoplasm of infected cell. In turn, high levels of cytoplasmic calcium may trigger membrane trafficking and transport of viral ER-associated proteins to viroplasms, sites of viral genome replication. In terms of biological role, induces and associates with structural rearrangements of intracellular membranes. Displays RNA-binding, nucleotide binding and NTPase activities. May play a role in virion morphogenesis and viral RNA encapsidation by interacting with the capsid protein VP3. Localizes the viral replication complex to the surface of membranous vesicles. Together with protein 3CD binds the Cis-Active RNA Element (CRE) which is involved in RNA synthesis initiation. Acts as a cofactor to stimulate the activity of 3D polymerase, maybe through a nucleid acid chaperone activity. Its function is as follows. Localizes the viral replication complex to the surface of membranous vesicles. It inhibits host cell endoplasmic reticulum-to-Golgi apparatus transport and causes the disassembly of the Golgi complex, possibly through GBF1 interaction. This would result in depletion of MHC, trail receptors and IFN receptors at the host cell surface. Plays an essential role in viral RNA replication by recruiting ACBD3 and PI4KB at the viral replication sites, thereby allowing the formation of the rearranged membranous structures where viral replication takes place. Functionally, acts as a primer for viral RNA replication and remains covalently bound to viral genomic RNA. VPg is uridylylated prior to priming replication into VPg-pUpU. The oriI viral genomic sequence may act as a template for this. The VPg-pUpU is then used as primer on the genomic RNA poly(A) by the RNA-dependent RNA polymerase to replicate the viral genome. During genome replication, the VPg-RNA linkage is removed by the host TDP2, thereby accelerating replication. During the late stage of the replication cycle, host TDP2 is excluded from sites of viral RNA synthesis and encapsidation, allowing for the generation of progeny virions. In terms of biological role, involved in the viral replication complex and viral polypeptide maturation. It exhibits protease activity with a specificity and catalytic efficiency that is different from protease 3C. Protein 3CD lacks polymerase activity. Protein 3CD binds to the 5'UTR of the viral genome. Replicates the viral genomic RNA on the surface of intracellular membranes. May form linear arrays of subunits that propagate along a strong head-to-tail interaction called interface-I. Covalently attaches UMP to a tyrosine of VPg, which is used to prime RNA synthesis. The positive stranded RNA genome is first replicated at virus induced membranous vesicles, creating a dsRNA genomic replication form. This dsRNA is then used as template to synthesize positive stranded RNA genomes. ss(+)RNA genomes are either translated, replicated or encapsidated. Its function is as follows. Major viral protease that mediates proteolytic processing of the polyprotein. Cleaves host EIF5B, contributing to host translation shutoff. Also cleaves host PABPC1, contributing to host translation shutoff. Cleaves host NLRP1, triggers host N-glycine-mediated degradation of the autoinhibitory NLRP1 N-terminal fragment. This Echovirus 9 (strain Hill) protein is Genome polyprotein.